We begin with the raw amino-acid sequence, 383 residues long: Chaperone protein DnaJ (383 aa).

The region spanning 6-71 (DYYEVLGVSK…QKRSQYDQFG (66 aa)) is the J domain. The segment at 141-223 (GVEKKVKVKK…CKGEGVEIGE (83 aa)) adopts a CR-type zinc-finger fold. Zn(2+)-binding residues include C154, C157, C171, C174, C197, C200, C211, and C214. CXXCXGXG motif repeat units follow at residues 154 to 161 (CSKCRGDG), 171 to 178 (CQTCHGTG), 197 to 204 (CPTCHGEG), and 211 to 218 (CSKCKGEG).

It belongs to the DnaJ family. As to quaternary structure, homodimer. Zn(2+) serves as cofactor.

The protein resides in the cytoplasm. In terms of biological role, participates actively in the response to hyperosmotic and heat shock by preventing the aggregation of stress-denatured proteins and by disaggregating proteins, also in an autonomous, DnaK-independent fashion. Unfolded proteins bind initially to DnaJ; upon interaction with the DnaJ-bound protein, DnaK hydrolyzes its bound ATP, resulting in the formation of a stable complex. GrpE releases ADP from DnaK; ATP binding to DnaK triggers the release of the substrate protein, thus completing the reaction cycle. Several rounds of ATP-dependent interactions between DnaJ, DnaK and GrpE are required for fully efficient folding. Also involved, together with DnaK and GrpE, in the DNA replication of plasmids through activation of initiation proteins. The protein is Chaperone protein DnaJ of Porphyromonas gingivalis (strain ATCC BAA-308 / W83).